We begin with the raw amino-acid sequence, 111 residues long: Cytochrome c6-like (111 aa).

A signal peptide spans 1 to 25 (MQKFLKLVLVTFLFLISTLTPPANA). Heme c is bound by residues Cys39, Cys42, His43, and Met83.

Belongs to the cytochrome c family. PetJ subfamily. Post-translationally, binds 1 heme c group covalently per subunit.

The protein resides in the cellular thylakoid lumen. The protein is Cytochrome c6-like of Nostoc sp. (strain PCC 7120 / SAG 25.82 / UTEX 2576).